Consider the following 374-residue polypeptide: Heptahelical transmembrane protein 5 (374 aa).

Residues 1-79 are Cytoplasmic-facing; sequence MGDEAEIKEH…LSIFTIHNET (79 aa). Residues 80–100 traverse the membrane as a helical segment; the sequence is LNVWTHLIGFFLFLALTIYTA. Topologically, residues 101-191 are extracellular; sequence TKVPSVVDLH…LIFRPITRWP (91 aa). A helical transmembrane segment spans residues 192–212; the sequence is FYAFLGGAIFCLLASSTCHLL. Residues 213-228 lie on the Cytoplasmic side of the membrane; the sequence is SCHSERVSYIMLRLDY. Residues 229-249 form a helical membrane-spanning segment; that stretch reads AGIAALIATSFYPPVYYSFMC. Topologically, residues 250–256 are extracellular; that stretch reads DPFFCNL. Residues 257–277 traverse the membrane as a helical segment; sequence YLGFITILGIATVLVSLLPVF. The Cytoplasmic segment spans residues 278–288; that stretch reads QSLEFRVVRAS. Residues 289–309 form a helical membrane-spanning segment; that stretch reads LFFGMGFSGLAPILHKLIIFW. Topologically, residues 310-313 are extracellular; sequence DQPE. Residues 314–334 form a helical membrane-spanning segment; sequence ALHMTGYEILMGLLYGLGAVV. The Cytoplasmic segment spans residues 335-347; the sequence is YATRIPERWMPGK. The helical transmembrane segment at 348-368 threads the bilayer; the sequence is FDIAGHSHQLFHVLVVAGALT. At 369–374 the chain is on the extracellular side; sequence HYRAGL.

It belongs to the ADIPOR family. In terms of tissue distribution, expressed in roots, leaves, stems and flowers.

The protein resides in the membrane. May play a role in abiotic stress response. The chain is Heptahelical transmembrane protein 5 (HHP5) from Arabidopsis thaliana (Mouse-ear cress).